Here is a 613-residue protein sequence, read N- to C-terminus: Lysophospholipase 1 (613 aa).

The first 21 residues, Met1–Ala21, serve as a signal peptide directing secretion. The region spanning Asp55–Asp593 is the PLA2c domain. Asn142, Asn173, Asn220, Asn244, Asn281, Asn319, Asn348, Asn365, Asn494, Asn499, Asn523, Asn551, and Asn572 each carry an N-linked (GlcNAc...) asparagine glycan.

The protein belongs to the lysophospholipase family.

It localises to the secreted. The catalysed reaction is a 1-acyl-sn-glycero-3-phosphocholine + H2O = sn-glycerol 3-phosphocholine + a fatty acid + H(+). Catalyzes the release of fatty acids from lysophospholipids. Required for survival under high osmolarity, for normal osmotic stress-induced gene expression, and for nutrient-mediated repression of sexual differentiation. The sequence is that of Lysophospholipase 1 (plb1) from Schizosaccharomyces pombe (strain 972 / ATCC 24843) (Fission yeast).